The sequence spans 276 residues: Large ribosomal subunit protein uL2 (276 aa).

Residues 210-276 (GRNRHRGIRP…KLIISRRKGK (67 aa)) are disordered. Residues 230 to 240 (DHPHGGGEGKK) are compositionally biased toward basic and acidic residues. The span at 255–276 (KGAKTRRKKASDKLIISRRKGK) shows a compositional bias: basic residues.

This sequence belongs to the universal ribosomal protein uL2 family. Part of the 50S ribosomal subunit. Forms a bridge to the 30S subunit in the 70S ribosome.

Functionally, one of the primary rRNA binding proteins. Required for association of the 30S and 50S subunits to form the 70S ribosome, for tRNA binding and peptide bond formation. It has been suggested to have peptidyltransferase activity; this is somewhat controversial. Makes several contacts with the 16S rRNA in the 70S ribosome. This is Large ribosomal subunit protein uL2 from Campylobacter jejuni subsp. jejuni serotype O:6 (strain 81116 / NCTC 11828).